Reading from the N-terminus, the 316-residue chain is Acetyl-coenzyme A carboxylase carboxyl transferase subunit alpha (316 aa).

Residues 39–293 (KLEEKNAQLT…KKHLQANLTN (255 aa)) enclose the CoA carboxyltransferase C-terminal domain.

It belongs to the AccA family. As to quaternary structure, acetyl-CoA carboxylase is a heterohexamer composed of biotin carboxyl carrier protein (AccB), biotin carboxylase (AccC) and two subunits each of ACCase subunit alpha (AccA) and ACCase subunit beta (AccD).

Its subcellular location is the cytoplasm. The enzyme catalyses N(6)-carboxybiotinyl-L-lysyl-[protein] + acetyl-CoA = N(6)-biotinyl-L-lysyl-[protein] + malonyl-CoA. It functions in the pathway lipid metabolism; malonyl-CoA biosynthesis; malonyl-CoA from acetyl-CoA: step 1/1. Component of the acetyl coenzyme A carboxylase (ACC) complex. First, biotin carboxylase catalyzes the carboxylation of biotin on its carrier protein (BCCP) and then the CO(2) group is transferred by the carboxyltransferase to acetyl-CoA to form malonyl-CoA. The chain is Acetyl-coenzyme A carboxylase carboxyl transferase subunit alpha from Coxiella burnetii (strain RSA 331 / Henzerling II).